Consider the following 5263-residue polypeptide: Fibroin heavy chain (5263 aa).

An N-terminal signal peptide occupies residues 1–21; that stretch reads MRVKTFVILCCALQYVAYTNA. The interval 149–5206 is highly repetitive; it reads AAVGAGAGAG…GSGAGAGGSV (5058 aa). A disulfide bridge links C5260 with C5263.

As to quaternary structure, silk fibroin elementary unit consists in a disulfide-linked heavy and light chain and a p25 glycoprotein in molar ratios of 6:6:1. This results in a complex of approximately 2.3 MDa. In terms of processing, the interchain disulfide bridge is essential for the intracellular transport and secretion of fibroin. As to expression, produced exclusively in the posterior (PSG) section of silk glands, which are essentially modified salivary glands.

In terms of biological role, core component of the silk filament; a strong, insoluble and chemically inert fiber. The protein is Fibroin heavy chain (FIBH) of Bombyx mori (Silk moth).